The sequence spans 668 residues: Probable serine/threonine-protein kinase abkB (668 aa).

Disordered stretches follow at residues 88-111 (YTNI…KTTA) and 132-162 (EVEE…DDNK). Positions 91–105 (IGGTSPNRQSVPENS) are enriched in polar residues. Residues 131 to 163 (KEVEEEIIDKNERGKEQEQENKQQKEQKDDNKS) adopt a coiled-coil conformation. Positions 138 to 162 (IDKNERGKEQEQENKQQKEQKDDNK) are enriched in basic and acidic residues. The Protein kinase domain occupies 314–668 (DFERLPINSA…EIPSTYHHHH (355 aa)). Residues 320 to 328 (INSASLAQV) and lysine 346 each bind ATP. Aspartate 478 functions as the Proton acceptor in the catalytic mechanism.

This sequence belongs to the protein kinase superfamily. ADCK protein kinase family.

The chain is Probable serine/threonine-protein kinase abkB (abkB) from Dictyostelium discoideum (Social amoeba).